A 1047-amino-acid chain; its full sequence is UPF0182 protein Mlut_14990 (1047 aa).

2 stretches are compositionally biased toward gly residues: residues methionine 1–glycine 27 and glycine 49–serine 59. The tract at residues methionine 1–glycine 66 is disordered. 7 helical membrane-spanning segments follow: residues proline 71–phenylalanine 91, valine 114–leucine 134, leucine 168–glycine 188, phenylalanine 214–leucine 234, alanine 266–asparagine 286, alanine 314–glycine 334, and isoleucine 341–valine 361. Disordered stretches follow at residues glycine 544 to glycine 568, glycine 941 to proline 965, and glutamate 1007 to glycine 1047. Positions threonine 555–threonine 565 are enriched in polar residues. Residues alanine 1015–proline 1037 are compositionally biased toward low complexity. The span at serine 1038–glycine 1047 shows a compositional bias: pro residues.

This sequence belongs to the UPF0182 family.

It localises to the cell membrane. The sequence is that of UPF0182 protein Mlut_14990 from Micrococcus luteus (strain ATCC 4698 / DSM 20030 / JCM 1464 / CCM 169 / CCUG 5858 / IAM 1056 / NBRC 3333 / NCIMB 9278 / NCTC 2665 / VKM Ac-2230) (Micrococcus lysodeikticus).